The sequence spans 210 residues: Probable nicotinate-nucleotide adenylyltransferase (210 aa).

This sequence belongs to the NadD family.

The catalysed reaction is nicotinate beta-D-ribonucleotide + ATP + H(+) = deamido-NAD(+) + diphosphate. The protein operates within cofactor biosynthesis; NAD(+) biosynthesis; deamido-NAD(+) from nicotinate D-ribonucleotide: step 1/1. Catalyzes the reversible adenylation of nicotinate mononucleotide (NaMN) to nicotinic acid adenine dinucleotide (NaAD). The sequence is that of Probable nicotinate-nucleotide adenylyltransferase from Streptococcus mutans serotype c (strain ATCC 700610 / UA159).